The chain runs to 300 residues: MLHLIGLGLSHETDITVRGLETIKKCKRVYLEAYTSILMAAEKETLEKFYGKELILADREMVEQASDDILAGAQEDDIAFLVVGDPFGATTHTDLVIRARELGIKYQTIHNASVMNAVGACGLQLYNFGQTVSLVFFTDSWKPDSFYDKIHENRKIGLHTLVLLDIKVKEQSIENIMRGRNVFEPPRYMSIEQAASQLLEIEESRDEKVYCSDTPAIAVSRLGSPRQCIKAGSLGELAEYESGEPLHSLIVLGNNVHDLEIDFLVEFADDPEAFKALITKDAENFKKEVKIMSYSDDDDE.

S-adenosyl-L-methionine contacts are provided by residues leucine 9, aspartate 85, glycine 88, 113–114 (SV), leucine 164, leucine 222, and histidine 247.

The protein belongs to the diphthine synthase family.

Its subcellular location is the cytoplasm. It catalyses the reaction 2-[(3S)-amino-3-carboxypropyl]-L-histidyl-[translation elongation factor 2] + 4 S-adenosyl-L-methionine = diphthine methyl ester-[translation elongation factor 2] + 4 S-adenosyl-L-homocysteine + 3 H(+). The protein operates within protein modification; peptidyl-diphthamide biosynthesis. Functionally, S-adenosyl-L-methionine-dependent methyltransferase that catalyzes four methylations of the modified target histidine residue in translation elongation factor 2 (EF-2), to form an intermediate called diphthine methyl ester. The four successive methylation reactions represent the second step of diphthamide biosynthesis. The polypeptide is Diphthine methyl ester synthase (DPH5) (Yarrowia lipolytica (strain CLIB 122 / E 150) (Yeast)).